Reading from the N-terminus, the 249-residue chain is Inhibitor of growth protein 4 (249 aa).

A coiled-coil region spans residues 25–118 (FQLMRDLDQR…ADLKEKQIES (94 aa)). 3 positions are modified to N6-acetyllysine: lysine 112, lysine 127, and lysine 129. The interval 115-163 (QIESSDYDSSSSKGKKKGRTQKEKKAARARSKGKNSDEEAPKAAQKKLK) is disordered. Positions 127-148 (KGKKKGRTQKEKKAARARSKGK) match the Bipartite nuclear localization signal motif. Arginine 133 carries the citrulline modification. N6-acetyllysine occurs at positions 146, 148, and 156. Arginine 166 carries the post-translational modification Citrulline. The segment at 196-245 (PTYCLCHQVSYGEMIGCDNPDCSIEWFHFACVGLTTKPRGKWFCPRCSQE) adopts a PHD-type zinc-finger fold. The Zn(2+) site is built by cysteine 199, cysteine 201, cysteine 212, cysteine 217, histidine 223, cysteine 226, cysteine 239, and cysteine 242.

It belongs to the ING family. As to quaternary structure, homodimer. Component of the HBO1 complex composed of KAT7/HBO1, MEAF6, ING4 or ING5, and one scaffold subunit: complexes containing BRPF scaffold (BRPF1, BRD1/BRPF2 or BRPF3) direct KAT7/HBO1 specificity towards H3K14ac, while complexes containing JADE scaffold (JADE1, JADE2 and JADE3) mediate acetylation of histone H4. Interacts with H3K4me3 and to a lesser extent with H3K4me2, the interaction augments KAT7/HBO1 acetylation activity on H3 tails. Interacts with EP300, RELA and TP53; these interactions may be indirect. Interacts with EGLN1. In terms of assembly, interacts with BCL2A1. Post-translationally, citrullination by PADI4 within the nuclear localization signal disrupts the interaction with p53 and increases susceptibility to degradation. As to expression, isoform 2, isoform 3, isoform 4 and isoform 5 are expressed in the mammary gland, ovary, spleen and muscle. In terms of tissue distribution, expressed in the mammary gland, ovary, spleen and muscle.

Its subcellular location is the nucleus. Its function is as follows. Component of HBO1 complexes, which specifically mediate acetylation of histone H3 at 'Lys-14' (H3K14ac), and have reduced activity toward histone H4. Through chromatin acetylation it may function in DNA replication. May inhibit tumor progression by modulating the transcriptional output of signaling pathways which regulate cell proliferation. Can suppress brain tumor angiogenesis through transcriptional repression of RELA/NFKB3 target genes when complexed with RELA. May also specifically suppress loss of contact inhibition elicited by activated oncogenes such as MYC. Represses hypoxia inducible factor's (HIF) activity by interacting with HIF prolyl hydroxylase 2 (EGLN1). Can enhance apoptosis induced by serum starvation in mammary epithelial cell line HC11. The chain is Inhibitor of growth protein 4 (Ing4) from Mus musculus (Mouse).